The chain runs to 275 residues: Small ribosomal subunit protein uS3 (275 aa).

Positions isoleucine 38–lysine 106 constitute a KH type-2 domain. The segment at alanine 217–serine 275 is disordered. Residues serine 238 to serine 275 show a composition bias toward low complexity.

Belongs to the universal ribosomal protein uS3 family. In terms of assembly, part of the 30S ribosomal subunit. Forms a tight complex with proteins S10 and S14.

Its function is as follows. Binds the lower part of the 30S subunit head. Binds mRNA in the 70S ribosome, positioning it for translation. This Mycobacterium marinum (strain ATCC BAA-535 / M) protein is Small ribosomal subunit protein uS3.